We begin with the raw amino-acid sequence, 269 residues long: Polyamine aminopropyltransferase (269 aa).

The PABS domain occupies 1 to 226 (MVWFFEYYDG…ALWSFIIGGE (226 aa)). Gln-28 is a binding site for S-methyl-5'-thioadenosine. 2 residues coordinate spermidine: His-59 and Asp-83. S-methyl-5'-thioadenosine is bound by residues Asp-102 and 133 to 134 (DG). The Proton acceptor role is filled by Asp-150. 150–153 (DSTD) provides a ligand contact to spermidine.

Belongs to the spermidine/spermine synthase family. Homodimer or homotetramer.

It is found in the cytoplasm. It catalyses the reaction S-adenosyl 3-(methylsulfanyl)propylamine + putrescine = S-methyl-5'-thioadenosine + spermidine + H(+). It participates in amine and polyamine biosynthesis; spermidine biosynthesis; spermidine from putrescine: step 1/1. Its function is as follows. Catalyzes the irreversible transfer of a propylamine group from the amino donor S-adenosylmethioninamine (decarboxy-AdoMet) to putrescine (1,4-diaminobutane) to yield spermidine. The polypeptide is Polyamine aminopropyltransferase (Archaeoglobus fulgidus (strain ATCC 49558 / DSM 4304 / JCM 9628 / NBRC 100126 / VC-16)).